The primary structure comprises 221 residues: GTP-binding nuclear protein Ran-2 (221 aa).

Positions 10–174 (DYPSFKLVIV…LYLARKLAGD (165 aa)) constitute a Small GTPase Ran-type domain. Residue 21–28 (DGGTGKTT) participates in GTP binding. The tract at residues 40-48 (KKYEPTIGV) is switch-I. GTP is bound by residues G71, 125–128 (NKVD), and 153–155 (SAK). The segment at 71–87 (GQEKFGGLRDGYYIHGQ) is switch-II.

The protein belongs to the small GTPase superfamily. Ran family. As to quaternary structure, found in a nuclear export complex with RanGTP, exportin and pre-miRNA.

The protein resides in the nucleus. In terms of biological role, GTP-binding protein involved in nucleocytoplasmic transport. Required for the import of protein into the nucleus and also for RNA export. Involved in chromatin condensation and control of cell cycle. This chain is GTP-binding nuclear protein Ran-2 (RAN2), found in Oryza sativa subsp. indica (Rice).